The primary structure comprises 140 residues: MAIERTLSIIKPDATRRNLTGAINARFEEAGLRIVGQKRLRLTTAQAEGFYEVHKERSFFGSLVEFMTSGPVVVQVLEGENAVLKNREVMGATNPANAAEHTIRKDFAESIEANSVHGSDSAENAAHEIAYFFAQTEIVA.

6 residues coordinate ATP: lysine 11, phenylalanine 59, arginine 87, threonine 93, arginine 104, and asparagine 114. Histidine 117 acts as the Pros-phosphohistidine intermediate in catalysis.

Belongs to the NDK family. Homotetramer. It depends on Mg(2+) as a cofactor.

It is found in the cytoplasm. The catalysed reaction is a 2'-deoxyribonucleoside 5'-diphosphate + ATP = a 2'-deoxyribonucleoside 5'-triphosphate + ADP. It carries out the reaction a ribonucleoside 5'-diphosphate + ATP = a ribonucleoside 5'-triphosphate + ADP. Functionally, major role in the synthesis of nucleoside triphosphates other than ATP. The ATP gamma phosphate is transferred to the NDP beta phosphate via a ping-pong mechanism, using a phosphorylated active-site intermediate. The chain is Nucleoside diphosphate kinase from Rhodospirillum rubrum (strain ATCC 11170 / ATH 1.1.1 / DSM 467 / LMG 4362 / NCIMB 8255 / S1).